The chain runs to 521 residues: Pentatricopeptide repeat-containing protein At4g26680, mitochondrial (521 aa).

The transit peptide at 1-38 directs the protein to the mitochondrion; the sequence is MIRISIGVNRRLRYQFSSFAGYSGSENPRLFKTLGAAN. PPR repeat units follow at residues 167–201, 202–236, 237–271, 272–306, 307–341, 342–376, 377–411, 412–446, 447–481, and 482–516; these read TPRVFDSLFKTFAHLKKFRNATDTFMQMKDYGFLP, TVESCNAYMSSLLGQGRVDIALRFYREMRRCKISP, NPYTLNMVMSGYCRSGKLDKGIELLQDMERLGFRA, TDVSYNTLIAGHCEKGLLSSALKLKNMMGKSGLQP, NVVTFNTLIHGFCRAMKLQEASKVFGEMKAVNVAP, NTVTYNTLINGYSQQGDHEMAFRFYEDMVCNGIQR, DILTYNALIFGLCKQAKTRKAAQFVKELDKENLVP, NSSTFSALIMGQCVRKNADRGFELYKSMIRSGCHP, NEQTFNMLVSAFCRNEDFDGASQVLREMVRRSIPL, and DSRTVHQVCNGLKHQGKDQLVKKLLQEMEGKKFLQ.

It belongs to the PPR family. P subfamily.

Its subcellular location is the mitochondrion. This Arabidopsis thaliana (Mouse-ear cress) protein is Pentatricopeptide repeat-containing protein At4g26680, mitochondrial.